Reading from the N-terminus, the 434-residue chain is D-amino acid dehydrogenase (434 aa).

3–17 (VLVLGSGVIGTASAY) contributes to the FAD binding site.

Belongs to the DadA oxidoreductase family. FAD is required as a cofactor.

The catalysed reaction is a D-alpha-amino acid + A + H2O = a 2-oxocarboxylate + AH2 + NH4(+). Its pathway is amino-acid degradation; D-alanine degradation; NH(3) and pyruvate from D-alanine: step 1/1. In terms of biological role, oxidative deamination of D-amino acids. The polypeptide is D-amino acid dehydrogenase (Pseudomonas putida (strain ATCC 700007 / DSM 6899 / JCM 31910 / BCRC 17059 / LMG 24140 / F1)).